The chain runs to 543 residues: Exodeoxyribonuclease 7 large subunit (543 aa).

A disordered region spans residues 498 to 543 (VTGEGDKASPPPQAASATTTPAPGRPNPLPKSPKKSEPPAGQGSLF).

The protein belongs to the XseA family. Heterooligomer composed of large and small subunits.

The protein resides in the cytoplasm. It carries out the reaction Exonucleolytic cleavage in either 5'- to 3'- or 3'- to 5'-direction to yield nucleoside 5'-phosphates.. In terms of biological role, bidirectionally degrades single-stranded DNA into large acid-insoluble oligonucleotides, which are then degraded further into small acid-soluble oligonucleotides. The polypeptide is Exodeoxyribonuclease 7 large subunit (Allorhizobium ampelinum (strain ATCC BAA-846 / DSM 112012 / S4) (Agrobacterium vitis (strain S4))).